A 53-amino-acid polypeptide reads, in one-letter code: Rubredoxin (53 aa).

The Rubredoxin-like domain maps to 1 to 53 (MQKFECTLCGYIYDPALVGPDTPDQDGAFEDVSENWVCPLCGAGKEDFEVYED). Fe cation is bound by residues Cys-6, Cys-9, Cys-38, and Cys-41.

This sequence belongs to the rubredoxin family. Fe(3+) is required as a cofactor.

Its function is as follows. Rubredoxin is a small nonheme, iron protein lacking acid-labile sulfide. Its single Fe, chelated to 4 Cys, functions as an electron acceptor and may also stabilize the conformation of the molecule. The sequence is that of Rubredoxin from Peptoniphilus asaccharolyticus (Peptostreptococcus asaccharolyticus).